The primary structure comprises 20 residues: XXLKGIPTDEEQATGLEEYA.

A disordered region spans residues 1-20; sequence XXLKGIPTDEEQATGLEEYA.

Belongs to the cytochrome c oxidase subunit 5B family. Component of the cytochrome c oxidase (complex IV, CIV), a multisubunit enzyme composed of 14 subunits. The complex is composed of a catalytic core of 3 subunits MT-CO1, MT-CO2 and MT-CO3, encoded in the mitochondrial DNA, and 11 supernumerary subunits COX4I, COX5A, COX5B, COX6A, COX6B, COX6C, COX7A, COX7B, COX7C, COX8 and NDUFA4, which are encoded in the nuclear genome. The complex exists as a monomer or a dimer and forms supercomplexes (SCs) in the inner mitochondrial membrane with NADH-ubiquinone oxidoreductase (complex I, CI) and ubiquinol-cytochrome c oxidoreductase (cytochrome b-c1 complex, complex III, CIII), resulting in different assemblies (supercomplex SCI(1)III(2)IV(1) and megacomplex MCI(2)III(2)IV(2)).

The protein resides in the mitochondrion inner membrane. Its pathway is energy metabolism; oxidative phosphorylation. Component of the cytochrome c oxidase, the last enzyme in the mitochondrial electron transport chain which drives oxidative phosphorylation. The respiratory chain contains 3 multisubunit complexes succinate dehydrogenase (complex II, CII), ubiquinol-cytochrome c oxidoreductase (cytochrome b-c1 complex, complex III, CIII) and cytochrome c oxidase (complex IV, CIV), that cooperate to transfer electrons derived from NADH and succinate to molecular oxygen, creating an electrochemical gradient over the inner membrane that drives transmembrane transport and the ATP synthase. Cytochrome c oxidase is the component of the respiratory chain that catalyzes the reduction of oxygen to water. Electrons originating from reduced cytochrome c in the intermembrane space (IMS) are transferred via the dinuclear copper A center (CU(A)) of subunit 2 and heme A of subunit 1 to the active site in subunit 1, a binuclear center (BNC) formed by heme A3 and copper B (CU(B)). The BNC reduces molecular oxygen to 2 water molecules using 4 electrons from cytochrome c in the IMS and 4 protons from the mitochondrial matrix. This Oncorhynchus mykiss (Rainbow trout) protein is Cytochrome c oxidase subunit 5B heart, mitochondrial.